The sequence spans 205 residues: Probable GTP-binding protein EngB (205 aa).

The region spanning 22–198 is the EngB-type G domain; the sequence is HLPEYAFIGR…LSYIDEVNQD (177 aa). GTP-binding positions include 30-37, 57-61, 75-78, 142-145, and 177-179; these read GRSNVGKS, GKTQL, DLPG, TKAD, and TSA. Residues serine 37 and threonine 59 each coordinate Mg(2+).

This sequence belongs to the TRAFAC class TrmE-Era-EngA-EngB-Septin-like GTPase superfamily. EngB GTPase family. Requires Mg(2+) as cofactor.

In terms of biological role, necessary for normal cell division and for the maintenance of normal septation. The polypeptide is Probable GTP-binding protein EngB (Flavobacterium psychrophilum (strain ATCC 49511 / DSM 21280 / CIP 103535 / JIP02/86)).